The sequence spans 727 residues: NADH-ubiquinone oxidoreductase 75 kDa subunit, mitochondrial (727 aa).

A mitochondrion-targeting transit peptide spans 1 to 23 (MLRIPVKRALIGLSKSPKGYVRS). The region spanning 30 to 108 (NLIEVFVDGQ…GWNILTNSEK (79 aa)) is the 2Fe-2S ferredoxin-type domain. C64, C75, and C78 together coordinate [2Fe-2S] cluster. Residue K84 is modified to N6-acetyllysine. C92 is a binding site for [2Fe-2S] cluster. The region spanning 108–147 (KSKKAREGVMEFLLANHPLDCPICDQGGECDLQDQSMMFG) is the 4Fe-4S His(Cys)3-ligated-type domain. Positions 124, 128, 131, 137, 176, 179, 182, and 226 each coordinate [4Fe-4S] cluster. The 4Fe-4S Mo/W bis-MGD-type domain maps to 245-301 (TRKTESIDVMDAVGSNIVVSTRTGEVMRILPRMHEDINEEWISDKTRFAYDGLKRQR). An N6-acetyllysine mark is found at K499 and K709.

It belongs to the complex I 75 kDa subunit family. In terms of assembly, core subunit of respiratory chain NADH dehydrogenase (Complex I) which is composed of 45 different subunits. This is the largest subunit of complex I and it is a component of the iron-sulfur (IP) fragment of the enzyme. Complex I associates with ubiquinol-cytochrome reductase complex (Complex III) to form supercomplexes. Interacts with MDM2 and AKAP1. Requires [2Fe-2S] cluster as cofactor. It depends on [4Fe-4S] cluster as a cofactor.

Its subcellular location is the mitochondrion inner membrane. It carries out the reaction a ubiquinone + NADH + 5 H(+)(in) = a ubiquinol + NAD(+) + 4 H(+)(out). Functionally, core subunit of the mitochondrial membrane respiratory chain NADH dehydrogenase (Complex I) which catalyzes electron transfer from NADH through the respiratory chain, using ubiquinone as an electron acceptor. Essential for catalysing the entry and efficient transfer of electrons within complex I. Plays a key role in the assembly and stability of complex I and participates in the association of complex I with ubiquinol-cytochrome reductase complex (Complex III) to form supercomplexes. The protein is NADH-ubiquinone oxidoreductase 75 kDa subunit, mitochondrial (Ndufs1) of Rattus norvegicus (Rat).